The primary structure comprises 862 residues: Short transient receptor potential channel 7 (862 aa).

Residues 1–21 (MLRNSTFKNMQRRHTTLREKG) form a disordered region. Over 1 to 351 (MLRNSTFKNM…GLRQQSIAVK (351 aa)) the chain is Cytoplasmic. The span at 10 to 21 (MQRRHTTLREKG) shows a compositional bias: basic residues. Position 15 is a phosphothreonine; by PKG/PRKG1 (Thr15). ANK repeat units follow at residues 42–71 (PEEE…TLNF), 77–106 (MGQN…LARV), 108–134 (DALL…FAQG), and 163–192 (HDIT…RIER). Residues 352 to 372 (FLAVFGVSIGLPFLAIAYWIA) form a helical membrane-spanning segment. Residues 373–383 (PCSKLGRTLRS) are Extracellular-facing. A helical membrane pass occupies residues 384 to 404 (PFMKFVAHAVSFTIFLGLLVV). Residues 405-465 (NASDRFEGVK…KEIWEEGPRE (61 aa)) are Cytoplasmic-facing. The chain crosses the membrane as a helical span at residues 466–486 (YVLHLWNLLDFGMLSIFVASF). The Extracellular portion of the chain corresponds to 487–537 (TARFMAFLKATEAQLYVDQHVQDDTLHNVSLPPEVAYFTYARDKWWPSDPQ). An N-linked (GlcNAc...) asparagine glycan is attached at Asn514. A helical transmembrane segment spans residues 538-558 (IISEGLYAIAVVLSFSRIAYI). Residues 559–581 (LPANESFGPLQISLGRTVKDIFK) are Cytoplasmic-facing. The helical transmembrane segment at 582–602 (FMVIFIMVFVAFMIGMFNLYS) threads the bilayer. The Extracellular segment spans residues 603–651 (YYRGAKYNPAFTTVEESFKTLFWSIFGLSEVISVVLKYDHKFIENIGYV). The helical transmembrane segment at 652 to 672 (LYGVYNVTMVVVLLNMLIAMI) threads the bilayer. The Cytoplasmic segment spans residues 673–862 (NNSYQEIEED…HLRVNKGKDI (190 aa)).

It belongs to the transient receptor (TC 1.A.4) family. STrpC subfamily. TRPC7 sub-subfamily. Interacts with MX1 and RNF24. Interacts (via ANK-repeat domains) with PRKG1. In terms of processing, phosphorylation by PRKG1 at Thr-15 negatively regulates TRPC7 activity.

The protein localises to the cell membrane. The protein resides in the nucleus envelope. The enzyme catalyses Ca(2+)(in) = Ca(2+)(out). Functionally, forms a receptor-activated non-selective calcium permeant cation channel. Probably is operated by a phosphatidylinositol second messenger system activated by receptor tyrosine kinases or G-protein coupled receptors. Activated by diacylglycerol (DAG). May also be activated by intracellular calcium store depletion. This is Short transient receptor potential channel 7 (TRPC7) from Homo sapiens (Human).